The primary structure comprises 129 residues: Small ribosomal subunit protein uS11 (129 aa).

Belongs to the universal ribosomal protein uS11 family. Part of the 30S ribosomal subunit. Interacts with proteins S7 and S18. Binds to IF-3.

In terms of biological role, located on the platform of the 30S subunit, it bridges several disparate RNA helices of the 16S rRNA. Forms part of the Shine-Dalgarno cleft in the 70S ribosome. In Azoarcus sp. (strain BH72), this protein is Small ribosomal subunit protein uS11.